The chain runs to 439 residues: Ribulose bisphosphate carboxylase/oxygenase activase, chloroplastic (439 aa).

167-174 is an ATP binding site; the sequence is GGKGQGKS.

This sequence belongs to the RuBisCO activase family.

The protein localises to the plastid. It is found in the chloroplast stroma. Functionally, activation of RuBisCO (ribulose-1,5-bisphosphate carboxylase/oxygenase; EC 4.1.1.39) involves the ATP-dependent carboxylation of the epsilon-amino group of lysine leading to a carbamate structure. The sequence is that of Ribulose bisphosphate carboxylase/oxygenase activase, chloroplastic (RCA) from Vigna radiata var. radiata (Mung bean).